A 355-amino-acid chain; its full sequence is MTHPRTALVMAGGTGGHIFPGLAVAEELRARGWKVHWLGTPGSMESRIVPPQGFAFEPIDFSGVRGKGLATLALLPLRLLRAFWQALAVVRRVQPDVVVGLGGYVTFPGGMMAVLCGKPLVVHEQNSVAGLVNKVLAGVADRVFTAFPGALRKGAWVGNPLRTAFTRQADPQARFAGRGGPLRLLVVGGSLGAKALNDIVPQALALIPAERRPVVTHQSGTAQIDALRANYAAAGVEATLTPFIDDTATAFAEADLIVCRAGASTVTEIAAVGAAAVFVPFPHAVDDHQTANARFLADAGGGWLVQQRDLSAEALAQLLQNTEREALLERALKAKTMQKIHATREVANACEELTA.

UDP-N-acetyl-alpha-D-glucosamine is bound by residues 14-16, asparagine 126, arginine 162, serine 190, isoleucine 244, and glutamine 289; that span reads TGG.

This sequence belongs to the glycosyltransferase 28 family. MurG subfamily.

Its subcellular location is the cell inner membrane. It catalyses the reaction di-trans,octa-cis-undecaprenyl diphospho-N-acetyl-alpha-D-muramoyl-L-alanyl-D-glutamyl-meso-2,6-diaminopimeloyl-D-alanyl-D-alanine + UDP-N-acetyl-alpha-D-glucosamine = di-trans,octa-cis-undecaprenyl diphospho-[N-acetyl-alpha-D-glucosaminyl-(1-&gt;4)]-N-acetyl-alpha-D-muramoyl-L-alanyl-D-glutamyl-meso-2,6-diaminopimeloyl-D-alanyl-D-alanine + UDP + H(+). It participates in cell wall biogenesis; peptidoglycan biosynthesis. Its function is as follows. Cell wall formation. Catalyzes the transfer of a GlcNAc subunit on undecaprenyl-pyrophosphoryl-MurNAc-pentapeptide (lipid intermediate I) to form undecaprenyl-pyrophosphoryl-MurNAc-(pentapeptide)GlcNAc (lipid intermediate II). The chain is UDP-N-acetylglucosamine--N-acetylmuramyl-(pentapeptide) pyrophosphoryl-undecaprenol N-acetylglucosamine transferase from Paracidovorax citrulli (strain AAC00-1) (Acidovorax citrulli).